A 64-amino-acid polypeptide reads, in one-letter code: Translational regulator CsrA 1 (64 aa).

This sequence belongs to the CsrA/RsmA family. In terms of assembly, homodimer; the beta-strands of each monomer intercalate to form a hydrophobic core, while the alpha-helices form wings that extend away from the core.

The protein resides in the cytoplasm. Functionally, a key translational regulator that binds mRNA to regulate translation initiation and/or mRNA stability. Mediates global changes in gene expression, shifting from rapid growth to stress survival by linking envelope stress, the stringent response and the catabolite repression systems. Usually binds in the 5'-UTR; binding at or near the Shine-Dalgarno sequence prevents ribosome-binding, repressing translation, binding elsewhere in the 5'-UTR can activate translation and/or stabilize the mRNA. Its function is antagonized by small RNA(s). The sequence is that of Translational regulator CsrA 1 from Pseudomonas syringae pv. tomato (strain ATCC BAA-871 / DC3000).